An 850-amino-acid chain; its full sequence is Trimethylguanosine synthase (850 aa).

The segment at 54-85 (NNAGDRVTEEEEDDHSSGTTESHSADEGDLDP) is disordered. Threonine 61 carries the phosphothreonine modification. Phosphoserine is present on residues serine 92 and serine 152. Disordered stretches follow at residues 278–311 (DQNA…DNDH), 327–454 (EVEQ…GGIP), and 523–566 (ISQE…PENC). A compositionally biased stretch (basic and acidic residues) spans 363–374 (TPKESDISENRS). Positions 375–390 (SDQPAQELQESSGTNT) are enriched in polar residues. Serine 405 and serine 431 each carry phosphoserine. Acidic residues predominate over residues 424–435 (DIDENPDSEVDD). Residues 548 to 562 (SMEKTDGLMETRDPE) are compositionally biased toward basic and acidic residues. Serine 571 is modified (phosphoserine). Residues 595 to 628 (TEGVANSPRAEAEVEIKKKKKKKKKNKNKKINGL) form a disordered region. Residues 611–624 (KKKKKKKKKNKNKK) show a composition bias toward basic residues. Aspartate 713 lines the S-adenosyl-L-methionine pocket.

Belongs to the methyltransferase superfamily. Trimethylguanosine synthase family. May form homooligomers. Interacts with CREBBP/CBP, EED/WAIT1, EP300/P300, NCOA6/PRIP, PPARBP/PBP and SMN. A 55 kDa isoform is widely expressed while a 90 kDa isoform is detected exclusively in brain and testis (at protein level).

Its subcellular location is the cytoplasm. The protein localises to the nucleus. The protein resides in the cajal body. It localises to the nucleolus. The catalysed reaction is a 5'-end (N(7)-methyl 5'-triphosphoguanosine)-ribonucleoside in snRNA + S-adenosyl-L-methionine = a 5'-end (N(2),N(7)-dimethyl 5'-triphosphoguanosine)-ribonucleoside in snRNA + S-adenosyl-L-homocysteine + H(+). The enzyme catalyses a 5'-end (N(7)-methyl 5'-triphosphoguanosine)-ribonucleoside in snoRNA + S-adenosyl-L-methionine = a 5'-end (N(2),N(7)-dimethyl 5'-triphosphoguanosine)-ribonucleoside in snoRNA + S-adenosyl-L-homocysteine + H(+). It catalyses the reaction a 5'-end (N(2),N(7)-dimethyl 5'-triphosphoguanosine)-ribonucleoside in snRNA + S-adenosyl-L-methionine = a 5'-end (N(2),N(2),N(7)-trimethyl 5'-triphosphoguanosine)-ribonucleoside in snRNA + S-adenosyl-L-homocysteine + H(+). It carries out the reaction a 5'-end (N(2),N(7)-dimethyl 5'-triphosphoguanosine)-ribonucleoside in snoRNA + S-adenosyl-L-methionine = a 5'-end (N(2),N(2),N(7)-trimethyl 5'-triphosphoguanosine)-ribonucleoside in snoRNA + S-adenosyl-L-homocysteine + H(+). In terms of biological role, catalyzes the 2 serial methylation steps for the conversion of the 7-monomethylguanosine (m(7)G) caps of snRNAs and snoRNAs to a 2,2,7-trimethylguanosine (m(2,2,7)G) cap structure. The enzyme is specific for guanine, and N7 methylation must precede N2 methylation. Hypermethylation of the m7G cap of U snRNAs leads to their concentration in nuclear foci, their colocalization with coilin and the formation of canonical Cajal bodies (CBs). Plays a role in transcriptional regulation. In Rattus norvegicus (Rat), this protein is Trimethylguanosine synthase.